We begin with the raw amino-acid sequence, 380 residues long: Outer mitochondrial transmembrane helix translocase (380 aa).

At 1-18 (MLSDIPRDALLRPLTRNE) the chain is on the mitochondrial intermembrane side. Residues 19 to 37 (VVGMLVRLTVFGAATYYSI) form a helical membrane-spanning segment. At 38–380 (KWVVDALDPT…PANLREVPLD (343 aa)) the chain is on the cytoplasmic side. 136 to 143 (GPPGCGKT) is a binding site for ATP.

The protein belongs to the AAA ATPase family. MSP1 subfamily.

It localises to the mitochondrion outer membrane. It is found in the peroxisome membrane. The protein resides in the postsynaptic cell membrane. It carries out the reaction [protein]-with a C-terminal TM segment(out) + ATP + H2O = [protein]-with a C-terminal TM segment(in) + ADP + phosphate + H(+). Its function is as follows. Outer mitochondrial translocase required to remove mislocalized tail-anchored transmembrane proteins on mitochondria. Specifically recognizes and binds tail-anchored transmembrane proteins: acts as a dislocase that mediates the ATP-dependent extraction of mistargeted tail-anchored transmembrane proteins from the mitochondrion outer membrane. Also plays a critical role in regulating the surface expression of AMPA receptors (AMPAR), thereby regulating synaptic plasticity and learning and memory. The protein is Outer mitochondrial transmembrane helix translocase of Danio rerio (Zebrafish).